Here is a 232-residue protein sequence, read N- to C-terminus: Histone H1A (232 aa).

Low complexity predominate over residues 1 to 18 (MSDPAVEVTPAVPVASPA). Disordered regions lie at residues 1–42 (MSDP…THLP) and 98–232 (LQTK…AKKA). The 75-residue stretch at 39 to 113 (THLPVSDMVV…GASGSFKLPA (75 aa)) folds into the H15 domain. 4 stretches are compositionally biased toward basic residues: residues 131-141 (KPKKAAAPKPK), 147-173 (KVKK…KTTK), 181-214 (AAKK…KAKK), and 222-232 (KAAKKPAAKKA).

It belongs to the histone H1/H5 family.

The protein resides in the nucleus. It localises to the chromosome. Histones H1 are necessary for the condensation of nucleosome chains into higher-order structures. This is Histone H1A from Chironomus tentans (Midge).